Consider the following 69-residue polypeptide: MKILTIEYASSSLRLSNSVHSGLLSIYLFNSSHLNASTNLGSSFCLHADGTPIVLRTKITSLPLIAASI.

This is an uncharacterized protein from Homo sapiens (Human).